Here is a 250-residue protein sequence, read N- to C-terminus: 3-deoxy-manno-octulosonate cytidylyltransferase (250 aa).

Belongs to the KdsB family.

The protein localises to the cytoplasm. It carries out the reaction 3-deoxy-alpha-D-manno-oct-2-ulosonate + CTP = CMP-3-deoxy-beta-D-manno-octulosonate + diphosphate. It functions in the pathway nucleotide-sugar biosynthesis; CMP-3-deoxy-D-manno-octulosonate biosynthesis; CMP-3-deoxy-D-manno-octulosonate from 3-deoxy-D-manno-octulosonate and CTP: step 1/1. The protein operates within bacterial outer membrane biogenesis; lipopolysaccharide biosynthesis. In terms of biological role, activates KDO (a required 8-carbon sugar) for incorporation into bacterial lipopolysaccharide in Gram-negative bacteria. This is 3-deoxy-manno-octulosonate cytidylyltransferase from Syntrophobacter fumaroxidans (strain DSM 10017 / MPOB).